Reading from the N-terminus, the 231-residue chain is MTISSPVIVALDYPDAAQALAMAQQLDPAKVRVKVGKEIFTRSGPAVVDSLHKLGFEVFLDLKFHDIPNTVAGAVAAAADMGVWMVNVHASGGQRMMEGAANAIANHAQRPHLIAVTVLTSMDDSDLQQVGVVDVPKVQVQRLAELAKASGMDGVVCSAQEAGLLKQACGAAFELVTPGIRPQGTAAGDQRRVLTPVQARDAGVDYMVIGRPITQSETPTDVVDTILRSLA.

Residues D12, K34, D61–T70, T120, R181, Q190, G210, and R211 contribute to the substrate site. Residue K63 is the Proton donor of the active site.

The protein belongs to the OMP decarboxylase family. Type 1 subfamily. In terms of assembly, homodimer.

It catalyses the reaction orotidine 5'-phosphate + H(+) = UMP + CO2. It participates in pyrimidine metabolism; UMP biosynthesis via de novo pathway; UMP from orotate: step 2/2. Catalyzes the decarboxylation of orotidine 5'-monophosphate (OMP) to uridine 5'-monophosphate (UMP). The polypeptide is Orotidine 5'-phosphate decarboxylase (Alcanivorax borkumensis (strain ATCC 700651 / DSM 11573 / NCIMB 13689 / SK2)).